The primary structure comprises 106 residues: Transcription initiation factor IIA subunit 2 (106 aa).

It belongs to the TFIIA subunit 2 family. In terms of assembly, TFIIA is a heterodimer of the large unprocessed subunit 1 and a small subunit gamma. It was originally believed to be a heterotrimer of an alpha, a beta and a gamma subunit.

The protein resides in the nucleus. TFIIA is a component of the transcription machinery of RNA polymerase II and plays an important role in transcriptional activation. TFIIA in a complex with TBP mediates transcriptional activity. Protein involved in the resistance to X.oryzae. The polypeptide is Transcription initiation factor IIA subunit 2 (TFIIAy) (Oryza sativa subsp. indica (Rice)).